Here is a 149-residue protein sequence, read N- to C-terminus: Transcriptional repressor NrdR (149 aa).

A zinc finger lies at 3-34 (CPFCSATDTKVIDSRLVADGHQVRRRRECVQC). The region spanning 49–139 (PRVVKQDGSR…VYRAFEDVSE (91 aa)) is the ATP-cone domain.

This sequence belongs to the NrdR family. Requires Zn(2+) as cofactor.

Functionally, negatively regulates transcription of bacterial ribonucleotide reductase nrd genes and operons by binding to NrdR-boxes. The polypeptide is Transcriptional repressor NrdR (Shewanella pealeana (strain ATCC 700345 / ANG-SQ1)).